The following is a 659-amino-acid chain: Oligopeptide-binding protein AmiA (659 aa).

The first 22 residues, 1 to 22 (MKKNRVFATAGLVLLAAGVLAA), serve as a signal peptide directing secretion. The N-palmitoyl cysteine moiety is linked to residue Cys-23. Residue Cys-23 is the site of S-diacylglycerol cysteine attachment.

The protein belongs to the bacterial solute-binding protein 5 family.

The protein localises to the cell membrane. Its function is as follows. Part of the binding-protein-dependent transport system for oligopeptides; probably an oligopeptide binding protein. This chain is Oligopeptide-binding protein AmiA (amiA), found in Streptococcus pneumoniae serotype 4 (strain ATCC BAA-334 / TIGR4).